The chain runs to 281 residues: sn-glycerol-3-phosphate transport system permease protein UgpE (281 aa).

Transmembrane regions (helical) follow at residues 16–36 (LILG…AATL), 85–105 (FSIT…IVWF), 113–133 (FFWM…FPTV), 142–162 (LDSY…TFLF), 202–222 (ALFV…LLII), and 247–267 (WNSV…IVLV). An ABC transmembrane type-1 domain is found at 77–268 (LLNSFVMAFS…IPPVVIVLVM (192 aa)).

This sequence belongs to the binding-protein-dependent transport system permease family. UgpAE subfamily. In terms of assembly, the complex is composed of two ATP-binding proteins (UgpC), two transmembrane proteins (UgpA and UgpE) and a solute-binding protein (UgpB).

It localises to the cell inner membrane. Its function is as follows. Part of the ABC transporter complex UgpBAEC involved in sn-glycerol-3-phosphate (G3P) import. Probably responsible for the translocation of the substrate across the membrane. In Shigella flexneri serotype 5b (strain 8401), this protein is sn-glycerol-3-phosphate transport system permease protein UgpE (ugpE).